Consider the following 79-residue polypeptide: Cell division topological specificity factor (79 aa).

It belongs to the MinE family.

Prevents the cell division inhibition by proteins MinC and MinD at internal division sites while permitting inhibition at polar sites. This ensures cell division at the proper site by restricting the formation of a division septum at the midpoint of the long axis of the cell. This is Cell division topological specificity factor from Nitratiruptor sp. (strain SB155-2).